The primary structure comprises 202 residues: ATP-dependent Clp protease proteolytic subunit (202 aa).

Residue serine 106 is the Nucleophile of the active site. The active site involves histidine 131.

It belongs to the peptidase S14 family. As to quaternary structure, fourteen ClpP subunits assemble into 2 heptameric rings which stack back to back to give a disk-like structure with a central cavity, resembling the structure of eukaryotic proteasomes.

It is found in the cytoplasm. It catalyses the reaction Hydrolysis of proteins to small peptides in the presence of ATP and magnesium. alpha-casein is the usual test substrate. In the absence of ATP, only oligopeptides shorter than five residues are hydrolyzed (such as succinyl-Leu-Tyr-|-NHMec, and Leu-Tyr-Leu-|-Tyr-Trp, in which cleavage of the -Tyr-|-Leu- and -Tyr-|-Trp bonds also occurs).. In terms of biological role, cleaves peptides in various proteins in a process that requires ATP hydrolysis. Has a chymotrypsin-like activity. Plays a major role in the degradation of misfolded proteins. In Shewanella sp. (strain W3-18-1), this protein is ATP-dependent Clp protease proteolytic subunit.